A 556-amino-acid polypeptide reads, in one-letter code: Arginine--tRNA ligase (556 aa).

The short motif at 117–127 is the 'HIGH' region element; that stretch reads PNVAKQMHVGH.

This sequence belongs to the class-I aminoacyl-tRNA synthetase family. Monomer.

It localises to the cytoplasm. The catalysed reaction is tRNA(Arg) + L-arginine + ATP = L-arginyl-tRNA(Arg) + AMP + diphosphate. This is Arginine--tRNA ligase from Cutibacterium acnes (strain DSM 16379 / KPA171202) (Propionibacterium acnes).